Consider the following 701-residue polypeptide: Elongation factor G (701 aa).

Residues 8 to 291 (GRYRNIGIVA…AVIDYLPAPT (284 aa)) form the tr-type G domain. GTP is bound by residues 17-24 (AHVDAGKT), 89-93 (DTPGH), and 143-146 (NKMD).

It belongs to the TRAFAC class translation factor GTPase superfamily. Classic translation factor GTPase family. EF-G/EF-2 subfamily.

It localises to the cytoplasm. Its function is as follows. Catalyzes the GTP-dependent ribosomal translocation step during translation elongation. During this step, the ribosome changes from the pre-translocational (PRE) to the post-translocational (POST) state as the newly formed A-site-bound peptidyl-tRNA and P-site-bound deacylated tRNA move to the P and E sites, respectively. Catalyzes the coordinated movement of the two tRNA molecules, the mRNA and conformational changes in the ribosome. The protein is Elongation factor G of Pseudomonas syringae pv. syringae (strain B728a).